Here is a 186-residue protein sequence, read N- to C-terminus: ADP-ribosylation factor-like protein 6 (186 aa).

Gly-2 carries the N-myristoyl glycine lipid modification. Residues 24–31, 69–73, and 130–133 each bind GTP; these read GLDNSGKT, DMSGQ, and NKMD.

This sequence belongs to the small GTPase superfamily. Arf family. As to quaternary structure, interacts with SEC61B, ARL6IP1, ARL6IP2, ARL6IP3, ARL6IP4 ARL6IP5 and ARL6IP6. Interacts (GTP-bound form) with the BBSome a complex that contains BBS1, BBS2, BBS4, BBS5, BBS7, BBS8/TTC8, BBS9 and BBIP10. Interacts (GTP-free form) with IFT27.

Its subcellular location is the cell projection. The protein localises to the cilium membrane. The protein resides in the cytoplasm. It localises to the cytoskeleton. It is found in the cilium axoneme. Its subcellular location is the cilium basal body. Functionally, involved in membrane protein trafficking at the base of the ciliary organelle. Mediates recruitment onto plasma membrane of the BBSome complex which would constitute a coat complex required for sorting of specific membrane proteins to the primary cilia. Together with the BBSome complex and LTZL1, controls SMO ciliary trafficking and contributes to the sonic hedgehog (SHH) pathway regulation. May regulate cilia assembly and disassembly and subsequent ciliary signaling events such as the Wnt signaling cascade. Isoform 2 may be required for proper retinal function and organization. The polypeptide is ADP-ribosylation factor-like protein 6 (ARL6) (Bos taurus (Bovine)).